Consider the following 382-residue polypeptide: Anhydro-N-acetylmuramic acid kinase (382 aa).

22 to 29 (GTSMDGVD) contributes to the ATP binding site.

This sequence belongs to the anhydro-N-acetylmuramic acid kinase family.

It carries out the reaction 1,6-anhydro-N-acetyl-beta-muramate + ATP + H2O = N-acetyl-D-muramate 6-phosphate + ADP + H(+). Its pathway is amino-sugar metabolism; 1,6-anhydro-N-acetylmuramate degradation. It functions in the pathway cell wall biogenesis; peptidoglycan recycling. Functionally, catalyzes the specific phosphorylation of 1,6-anhydro-N-acetylmuramic acid (anhMurNAc) with the simultaneous cleavage of the 1,6-anhydro ring, generating MurNAc-6-P. Is required for the utilization of anhMurNAc either imported from the medium or derived from its own cell wall murein, and thus plays a role in cell wall recycling. In Burkholderia lata (strain ATCC 17760 / DSM 23089 / LMG 22485 / NCIMB 9086 / R18194 / 383), this protein is Anhydro-N-acetylmuramic acid kinase.